The following is a 320-amino-acid chain: Ferrochelatase (320 aa).

Fe cation contacts are provided by histidine 194 and glutamate 275.

This sequence belongs to the ferrochelatase family.

Its subcellular location is the cytoplasm. It catalyses the reaction heme b + 2 H(+) = protoporphyrin IX + Fe(2+). Its pathway is porphyrin-containing compound metabolism; protoheme biosynthesis; protoheme from protoporphyrin-IX: step 1/1. In terms of biological role, catalyzes the ferrous insertion into protoporphyrin IX. In Vibrio parahaemolyticus serotype O3:K6 (strain RIMD 2210633), this protein is Ferrochelatase.